Reading from the N-terminus, the 436-residue chain is GTPase Der (436 aa).

2 EngA-type G domains span residues 4–167 (PVVA…PKEE) and 176–351 (VKFS…DNHS). GTP is bound by residues 10–17 (GRPNVGKS), 57–61 (DTGGI), 119–122 (NKVD), 182–189 (GRPNVGKS), 229–233 (DTAGM), and 294–297 (NKWD). Residues 352 to 436 (LRVQSSMLND…PIRVIARKRK (85 aa)) enclose the KH-like domain.

The protein belongs to the TRAFAC class TrmE-Era-EngA-EngB-Septin-like GTPase superfamily. EngA (Der) GTPase family. Associates with the 50S ribosomal subunit.

GTPase that plays an essential role in the late steps of ribosome biogenesis. This is GTPase Der from Listeria innocua serovar 6a (strain ATCC BAA-680 / CLIP 11262).